Reading from the N-terminus, the 422-residue chain is UDP-N-acetylglucosamine 1-carboxyvinyltransferase (422 aa).

22–23 (KN) is a phosphoenolpyruvate binding site. Arginine 94 contacts UDP-N-acetyl-alpha-D-glucosamine. Cysteine 118 (proton donor) is an active-site residue. Cysteine 118 carries the post-translational modification 2-(S-cysteinyl)pyruvic acid O-phosphothioketal. UDP-N-acetyl-alpha-D-glucosamine is bound by residues 123-127 (RPVDL), 163-166 (KVSV), aspartate 308, and isoleucine 330.

It belongs to the EPSP synthase family. MurA subfamily.

It is found in the cytoplasm. It catalyses the reaction phosphoenolpyruvate + UDP-N-acetyl-alpha-D-glucosamine = UDP-N-acetyl-3-O-(1-carboxyvinyl)-alpha-D-glucosamine + phosphate. The protein operates within cell wall biogenesis; peptidoglycan biosynthesis. Its function is as follows. Cell wall formation. Adds enolpyruvyl to UDP-N-acetylglucosamine. The sequence is that of UDP-N-acetylglucosamine 1-carboxyvinyltransferase from Yersinia enterocolitica serotype O:8 / biotype 1B (strain NCTC 13174 / 8081).